A 30-amino-acid chain; its full sequence is Brevinin-2Ej (30 aa).

Cysteine 24 and cysteine 30 are disulfide-bonded.

Expressed by the skin glands.

It is found in the secreted. Its function is as follows. Shows antibacterial activity against representative Gram-negative and Gram-positive bacterial species, and hemolytic activity. This is Brevinin-2Ej from Pelophylax ridibundus (Marsh frog).